We begin with the raw amino-acid sequence, 137 residues long: Peptide methionine sulfoxide reductase MsrB (137 aa).

Residues 7-129 enclose the MsrB domain; sequence AEELKKNLSD…NSASLRFTDG (123 aa). Cys-46, Cys-49, Cys-95, and Cys-98 together coordinate Zn(2+). Cys-118 functions as the Nucleophile in the catalytic mechanism.

It belongs to the MsrB Met sulfoxide reductase family. It depends on Zn(2+) as a cofactor.

The catalysed reaction is L-methionyl-[protein] + [thioredoxin]-disulfide + H2O = L-methionyl-(R)-S-oxide-[protein] + [thioredoxin]-dithiol. This is Peptide methionine sulfoxide reductase MsrB from Shigella dysenteriae serotype 1 (strain Sd197).